The chain runs to 65 residues: Large ribosomal subunit protein uL29 (65 aa).

Belongs to the universal ribosomal protein uL29 family.

The polypeptide is Large ribosomal subunit protein uL29 (Acidovorax ebreus (strain TPSY) (Diaphorobacter sp. (strain TPSY))).